The following is a 318-amino-acid chain: NADH-ubiquinone oxidoreductase chain 1 (318 aa).

8 consecutive transmembrane segments (helical) span residues 2–22, 68–88, 100–120, 146–166, 171–191, 213–233, 253–273, and 285–305; these read PMTN…FLML, ITLY…LWTP, LGLL…LWSG, LAII…STLV, HLWL…STLA, IEYA…NIIM, ELYT…FLWI, and LMHL…MWYI.

Belongs to the complex I subunit 1 family. As to quaternary structure, core subunit of respiratory chain NADH dehydrogenase (Complex I) which is composed of 45 different subunits.

The protein resides in the mitochondrion inner membrane. The catalysed reaction is a ubiquinone + NADH + 5 H(+)(in) = a ubiquinol + NAD(+) + 4 H(+)(out). In terms of biological role, core subunit of the mitochondrial membrane respiratory chain NADH dehydrogenase (Complex I) which catalyzes electron transfer from NADH through the respiratory chain, using ubiquinone as an electron acceptor. Essential for the catalytic activity and assembly of complex I. The chain is NADH-ubiquinone oxidoreductase chain 1 (MT-ND1) from Pan troglodytes (Chimpanzee).